The chain runs to 84 residues: Cell division topological specificity factor (84 aa).

This sequence belongs to the MinE family.

In terms of biological role, prevents the cell division inhibition by proteins MinC and MinD at internal division sites while permitting inhibition at polar sites. This ensures cell division at the proper site by restricting the formation of a division septum at the midpoint of the long axis of the cell. This Ralstonia nicotianae (strain ATCC BAA-1114 / GMI1000) (Ralstonia solanacearum) protein is Cell division topological specificity factor.